Consider the following 618-residue polypeptide: Sulfite reductase [NADPH] flavoprotein alpha-component (618 aa).

One can recognise a Flavodoxin-like domain in the interval Val64–Val202. Residues Ser70–Ala75, Ser117–Gly120, and Leu153–Cys162 each bind FMN. In terms of domain architecture, FAD-binding FR-type spans Thr253 to Pro467. FAD contacts are provided by residues Thr341, Lys375, Arg405–Ser408, Thr423–Gly425, Tyr429, and Gly438–Ser441. NADP(+) is bound by residues Ser538 to Arg539, Lys544 to Gln548, and Asp580. Tyr618 contributes to the FAD binding site.

The protein belongs to the NADPH-dependent sulphite reductase flavoprotein subunit CysJ family. This sequence in the N-terminal section; belongs to the flavodoxin family. It in the C-terminal section; belongs to the flavoprotein pyridine nucleotide cytochrome reductase family. As to quaternary structure, alpha(8)-beta(8). The alpha component is a flavoprotein, the beta component is a hemoprotein. The cofactor is FAD. Requires FMN as cofactor.

The enzyme catalyses hydrogen sulfide + 3 NADP(+) + 3 H2O = sulfite + 3 NADPH + 4 H(+). It participates in sulfur metabolism; hydrogen sulfide biosynthesis; hydrogen sulfide from sulfite (NADPH route): step 1/1. Its function is as follows. Component of the sulfite reductase complex that catalyzes the 6-electron reduction of sulfite to sulfide. This is one of several activities required for the biosynthesis of L-cysteine from sulfate. The flavoprotein component catalyzes the electron flow from NADPH -&gt; FAD -&gt; FMN to the hemoprotein component. The sequence is that of Sulfite reductase [NADPH] flavoprotein alpha-component from Yersinia pseudotuberculosis serotype I (strain IP32953).